We begin with the raw amino-acid sequence, 258 residues long: Phosphosulfolactate synthase (258 aa).

This sequence belongs to the phosphosulfolactate synthase family.

The enzyme catalyses (2R)-O-phospho-3-sulfolactate = phosphoenolpyruvate + sulfite + H(+). It functions in the pathway cofactor biosynthesis; coenzyme M biosynthesis; sulfoacetaldehyde from phosphoenolpyruvate and sulfite: step 1/4. Functionally, catalyzes the addition of sulfite to phosphoenolpyruvate (PEP) to yield (2R)-phospho-3-sulfolactate (PSL). This Methanothermobacter thermautotrophicus (strain ATCC 29096 / DSM 1053 / JCM 10044 / NBRC 100330 / Delta H) (Methanobacterium thermoautotrophicum) protein is Phosphosulfolactate synthase (comA).